Here is a 374-residue protein sequence, read N- to C-terminus: Ribonuclease D (374 aa).

The region spanning 6-171 (IISTTEDLKK…RATRVILLSK (166 aa)) is the 3'-5' exonuclease domain. One can recognise an HRDC domain in the interval 213-292 (DRKSIGVAQE…ARALNKKEVD (80 aa)).

It belongs to the RNase D family. A divalent metal cation serves as cofactor.

Its subcellular location is the cytoplasm. The enzyme catalyses Exonucleolytic cleavage that removes extra residues from the 3'-terminus of tRNA to produce 5'-mononucleotides.. Exonuclease involved in the 3' processing of various precursor tRNAs. Initiates hydrolysis at the 3'-terminus of an RNA molecule and releases 5'-mononucleotides. This chain is Ribonuclease D, found in Desulfotalea psychrophila (strain LSv54 / DSM 12343).